Consider the following 266-residue polypeptide: Indole-3-glycerol phosphate synthase (266 aa).

The protein belongs to the TrpC family.

The enzyme catalyses 1-(2-carboxyphenylamino)-1-deoxy-D-ribulose 5-phosphate + H(+) = (1S,2R)-1-C-(indol-3-yl)glycerol 3-phosphate + CO2 + H2O. It participates in amino-acid biosynthesis; L-tryptophan biosynthesis; L-tryptophan from chorismate: step 4/5. The chain is Indole-3-glycerol phosphate synthase from Variovorax paradoxus (strain S110).